Reading from the N-terminus, the 175-residue chain is Translation initiation factor IF-3 (175 aa).

This sequence belongs to the IF-3 family. As to quaternary structure, monomer.

The protein localises to the cytoplasm. Its function is as follows. IF-3 binds to the 30S ribosomal subunit and shifts the equilibrium between 70S ribosomes and their 50S and 30S subunits in favor of the free subunits, thus enhancing the availability of 30S subunits on which protein synthesis initiation begins. This Chromobacterium violaceum (strain ATCC 12472 / DSM 30191 / JCM 1249 / CCUG 213 / NBRC 12614 / NCIMB 9131 / NCTC 9757 / MK) protein is Translation initiation factor IF-3.